The following is a 123-amino-acid chain: Small ribosomal subunit protein uS12 (123 aa).

Position 89 is a 3-methylthioaspartic acid (D89).

The protein belongs to the universal ribosomal protein uS12 family. In terms of assembly, part of the 30S ribosomal subunit. Contacts proteins S8 and S17. May interact with IF1 in the 30S initiation complex.

Its function is as follows. With S4 and S5 plays an important role in translational accuracy. Functionally, interacts with and stabilizes bases of the 16S rRNA that are involved in tRNA selection in the A site and with the mRNA backbone. Located at the interface of the 30S and 50S subunits, it traverses the body of the 30S subunit contacting proteins on the other side and probably holding the rRNA structure together. The combined cluster of proteins S8, S12 and S17 appears to hold together the shoulder and platform of the 30S subunit. This chain is Small ribosomal subunit protein uS12, found in Bartonella bacilliformis (strain ATCC 35685 / KC583 / Herrer 020/F12,63).